The following is a 376-amino-acid chain: Glucose-1-phosphate adenylyltransferase (376 aa).

Residues Y101, G166, 181 to 182 (EK), and S192 each bind alpha-D-glucose 1-phosphate.

It belongs to the bacterial/plant glucose-1-phosphate adenylyltransferase family. In terms of assembly, homotetramer.

The catalysed reaction is alpha-D-glucose 1-phosphate + ATP + H(+) = ADP-alpha-D-glucose + diphosphate. Its pathway is glycan biosynthesis; glycogen biosynthesis. Its function is as follows. Involved in the biosynthesis of ADP-glucose, a building block required for the elongation reactions to produce glycogen. Catalyzes the reaction between ATP and alpha-D-glucose 1-phosphate (G1P) to produce pyrophosphate and ADP-Glc. The protein is Glucose-1-phosphate adenylyltransferase of Bacillus cytotoxicus (strain DSM 22905 / CIP 110041 / 391-98 / NVH 391-98).